A 214-amino-acid polypeptide reads, in one-letter code: Uridine kinase (214 aa).

ATP is bound at residue 15 to 22 (GASASGKS).

The protein belongs to the uridine kinase family.

It localises to the cytoplasm. It catalyses the reaction uridine + ATP = UMP + ADP + H(+). The enzyme catalyses cytidine + ATP = CMP + ADP + H(+). It functions in the pathway pyrimidine metabolism; CTP biosynthesis via salvage pathway; CTP from cytidine: step 1/3. Its pathway is pyrimidine metabolism; UMP biosynthesis via salvage pathway; UMP from uridine: step 1/1. The polypeptide is Uridine kinase (Tolumonas auensis (strain DSM 9187 / NBRC 110442 / TA 4)).